The primary structure comprises 212 residues: Probable octanoyltransferase (212 aa).

Residues 28–199 (GVSEEMILVT…NLETLLQRQE (172 aa)) form the BPL/LPL catalytic domain. Residues 66-73 (RGGDATYH), 130-132 (SVG), and 143-145 (GVA) each bind substrate. Residue Cys161 is the Acyl-thioester intermediate of the active site.

Belongs to the LipB family.

The protein localises to the cytoplasm. The catalysed reaction is octanoyl-[ACP] + L-lysyl-[protein] = N(6)-octanoyl-L-lysyl-[protein] + holo-[ACP] + H(+). It participates in protein modification; protein lipoylation via endogenous pathway; protein N(6)-(lipoyl)lysine from octanoyl-[acyl-carrier-protein]: step 1/2. In terms of biological role, catalyzes the transfer of endogenously produced octanoic acid from octanoyl-acyl-carrier-protein onto the lipoyl domains of lipoate-dependent enzymes. Lipoyl-ACP can also act as a substrate although octanoyl-ACP is likely to be the physiological substrate. In Pyrobaculum arsenaticum (strain DSM 13514 / JCM 11321 / PZ6), this protein is Probable octanoyltransferase.